A 181-amino-acid polypeptide reads, in one-letter code: Ribosome-recycling factor (181 aa).

Positions 135–160 are disordered; that stretch reads MDDIKKDKDMPEDDARKAEDQTQKLT.

It belongs to the RRF family.

The protein resides in the cytoplasm. Functionally, responsible for the release of ribosomes from messenger RNA at the termination of protein biosynthesis. May increase the efficiency of translation by recycling ribosomes from one round of translation to another. In Leuconostoc mesenteroides subsp. mesenteroides (strain ATCC 8293 / DSM 20343 / BCRC 11652 / CCM 1803 / JCM 6124 / NCDO 523 / NBRC 100496 / NCIMB 8023 / NCTC 12954 / NRRL B-1118 / 37Y), this protein is Ribosome-recycling factor.